Consider the following 317-residue polypeptide: 17-beta-hydroxysteroid dehydrogenase type 6 (317 aa).

The N-terminal stretch at 1-17 (MWLYLAVLLGLYYLLRW) is a signal peptide. NAD(+) is bound at residue 33–57 (FITGCDSGFGNQLARQLDLRGLRVL). 2 N-linked (GlcNAc...) asparagine glycosylation sites follow: Asn71 and Asn161. Ser164 is a binding site for substrate. The active-site Proton acceptor is the Tyr176.

Belongs to the short-chain dehydrogenases/reductases (SDR) family.

Its subcellular location is the microsome membrane. The protein resides in the endoplasmic reticulum membrane. The enzyme catalyses all-trans-retinol--[retinol-binding protein] + NAD(+) = all-trans-retinal--[retinol-binding protein] + NADH + H(+). The catalysed reaction is all-trans-retinol + NAD(+) = all-trans-retinal + NADH + H(+). It catalyses the reaction androsterone + NAD(+) = 5alpha-androstan-3,17-dione + NADH + H(+). It carries out the reaction testosterone + NAD(+) = androst-4-ene-3,17-dione + NADH + H(+). The enzyme catalyses 5alpha-androstane-3alpha,17beta-diol + NAD(+) = 17beta-hydroxy-5alpha-androstan-3-one + NADH + H(+). The catalysed reaction is 17beta-estradiol + NAD(+) = estrone + NADH + H(+). It catalyses the reaction 17beta-estradiol + NADP(+) = estrone + NADPH + H(+). It carries out the reaction 3alpha-hydroxy-5alpha-pregnan-20-one + NAD(+) = 5alpha-pregnane-3,20-dione + NADH + H(+). The enzyme catalyses 5alpha-androstane-3beta,17beta-diol + NAD(+) = 17beta-hydroxy-5alpha-androstan-3-one + NADH + H(+). The catalysed reaction is 3beta-hydroxy-5alpha-androstan-17-one + NAD(+) = 5alpha-androstan-3,17-dione + NADH + H(+). In terms of biological role, NAD-dependent oxidoreductase with broad substrate specificity that shows both oxidative and reductive activity (in vitro). Has 17-beta-hydroxysteroid dehydrogenase activity towards various steroids (in vitro). Converts 5-alpha-androstan-3-alpha,17-beta-diol to androsterone and estradiol to estrone (in vitro). Has 3-alpha-hydroxysteroid dehydrogenase activity towards androsterone (in vitro). Has retinol dehydrogenase activity towards all-trans-retinol (in vitro). Can convert androsterone to epi-androsterone. Androsterone is first oxidized to 5-alpha-androstane-3,17-dione and then reduced to epi-andosterone. Can act on both C-19 and C-21 3-alpha-hydroxysteroids. This is 17-beta-hydroxysteroid dehydrogenase type 6 (HSD17B6) from Bos taurus (Bovine).